Reading from the N-terminus, the 113-residue chain is U11-theraphotoxin-Hhn1s (113 aa).

The first 21 residues, 1-21 (MNTVRVTFLLVFVLAVSLGQA), serve as a signal peptide directing secretion. Positions 22 to 74 (DKDENRMEMQEKTEQGKSYLDFAENLLLQKLEELEAKLLEEDSEESRNSRQKR) are excised as a propeptide. Residues 61–83 (EEDSEESRNSRQKRCIGEGVPCD) form a disordered region. Disulfide bonds link cysteine 75/cysteine 90, cysteine 82/cysteine 95, and cysteine 89/cysteine 110.

The protein belongs to the neurotoxin 14 (magi-1) family. 01 (HNTX-16) subfamily. As to expression, expressed by the venom gland.

Its subcellular location is the secreted. In terms of biological role, probable ion channel inhibitor. This Cyriopagopus hainanus (Chinese bird spider) protein is U11-theraphotoxin-Hhn1s.